The primary structure comprises 492 residues: Catalase-3 (492 aa).

Active-site residues include histidine 65 and asparagine 138. Tyrosine 348 is a heme binding site.

It belongs to the catalase family. In terms of assembly, homotetramer and heterotetramer. At least six or seven isozymes are produced from a mixture of 3 gene products. Interacts with NCA1. Interacts with LSD1. Heme serves as cofactor.

It localises to the peroxisome. It catalyses the reaction 2 H2O2 = O2 + 2 H2O. In terms of biological role, occurs in almost all aerobically respiring organisms and serves to protect cells from the toxic effects of hydrogen peroxide. In Arabidopsis thaliana (Mouse-ear cress), this protein is Catalase-3 (CAT3).